The following is a 299-amino-acid chain: Cold shock protein 1 (299 aa).

Alanine 2 is modified (N-acetylalanine). The region spanning 12-76 (TGKVNWFNAS…GKTKAVNVTA (65 aa)) is the CSD domain. The tract at residues 76 to 97 (APGGGSLKKENNSRGNGARRGG) is disordered. 7 consecutive CCHC-type zinc fingers follow at residues 100–117 (SGCY…DCGI), 132–149 (EGCY…DCTS), 164–181 (DGCY…DCTQ), 198–215 (DGCY…DCTQ), 230–247 (GTCY…DCAT), 253–270 (RGCY…DCDQ), and 280–297 (NACY…ECSS).

It belongs to the cold shock protein (CSP) family. In terms of tissue distribution, mostly expressed in shoot apices and siliques, and, to a lower extent, in roots, cotyledons, stems, shoots, leaves, floral buds and flowers.

It localises to the nucleus. Its subcellular location is the cytoplasm. In terms of biological role, chaperone that binds to RNA, single- (ssDNA) and double-stranded (dsDNA) DNA, and unwinds nucleic acid duplex. Exhibits a DNA melting activity. May be involved in cold resistance. Prevents seed germination under dehydration or salt stress conditions. The polypeptide is Cold shock protein 1 (CSP1) (Arabidopsis thaliana (Mouse-ear cress)).